The chain runs to 611 residues: Probable potassium transport system protein Kup (611 aa).

13 helical membrane passes run 24 to 44, 55 to 75, 102 to 122, 143 to 163, 175 to 195, 218 to 238, 252 to 272, 275 to 295, 296 to 316, 344 to 364, 374 to 394, 400 to 420, and 423 to 443; these read LVFGDIGTSPIYTLAVLFLFL, VSLIFWTLLIMVTVQYTFLAM, VAVFTLLATLGISLMIGECVI, LIAQDWLIFLAILIALGLFLF, FGPVMVIWFLTLFISGAISVA, LLGFFSLSMIVLCATGAEALF, AWGFVFIAVFFSYLGQAAYLL, TDVINPLFEMIFSLSQILYIP, FLLLMIIATIIASQAVISGIF, IYINTVNWLLCIAVICVLLIF, YGLAVTGTMSITGSFMIAIFL, LYMGIALIVTLVDITYFLSTV, and ITHGGYLSLVIAAIPFTIVII.

The protein belongs to the HAK/KUP transporter (TC 2.A.72) family.

Its subcellular location is the cell membrane. The enzyme catalyses K(+)(in) + H(+)(in) = K(+)(out) + H(+)(out). Functionally, transport of potassium into the cell. Likely operates as a K(+):H(+) symporter. The chain is Probable potassium transport system protein Kup from Methanospirillum hungatei JF-1 (strain ATCC 27890 / DSM 864 / NBRC 100397 / JF-1).